Here is a 223-residue protein sequence, read N- to C-terminus: RNA-free ribonuclease P (223 aa).

This sequence belongs to the HARP family.

The catalysed reaction is Endonucleolytic cleavage of RNA, removing 5'-extranucleotides from tRNA precursor.. Functionally, RNA-free RNase P that catalyzes the removal of the 5'-leader sequence from pre-tRNA to produce the mature 5'-terminus. The polypeptide is RNA-free ribonuclease P (Methanococcus vannielii (strain ATCC 35089 / DSM 1224 / JCM 13029 / OCM 148 / SB)).